Reading from the N-terminus, the 206-residue chain is Large ribosomal subunit protein mL40 (206 aa).

The transit peptide at 1-46 (MTASVLRSISLALRPTSGLLGTWQTQLRETHQRASLLSFWELIPMR) directs the protein to the mitochondrion. The tract at residues 168-192 (LFPFEKEGPHYTPPIPNYQPPEGRY) is disordered.

This sequence belongs to the mitochondrion-specific ribosomal protein mL40 family. As to quaternary structure, component of the mitochondrial large ribosomal subunit (mt-LSU). Mature mammalian 55S mitochondrial ribosomes consist of a small (28S) and a large (39S) subunit. The 28S small subunit contains a 12S ribosomal RNA (12S mt-rRNA) and 30 different proteins. The 39S large subunit contains a 16S rRNA (16S mt-rRNA), a copy of mitochondrial valine transfer RNA (mt-tRNA(Val)), which plays an integral structural role, and 52 different proteins. mL40 binds to the major groove of the anticodon stem of mt-tRNA(Val) in the central protuberance. In terms of tissue distribution, ubiquitous.

It is found in the mitochondrion. This Homo sapiens (Human) protein is Large ribosomal subunit protein mL40 (MRPL40).